The chain runs to 496 residues: Coiled-coil domain-containing protein 77 (496 aa).

Residues 1–42 (MDFSPPHGLRGGRSPSLQDTTISSSHTQKNGGDSTPLPPINE) are disordered. The segment covering 15-33 (PSLQDTTISSSHTQKNGGD) has biased composition (polar residues). Residues 51-113 (RELLEYYRKK…KALSDMQVYL (63 aa)) adopt a coiled-coil conformation. The disordered stretch occupies residues 170–208 (QRTVQSGDPFDRKVQRSGRAGVKQVPLKAPGKQDRTKAA). Residues 214–495 (QILLLQVEAL…IYGLENELRI (282 aa)) adopt a coiled-coil conformation.

The polypeptide is Coiled-coil domain-containing protein 77 (ccdc77) (Xenopus laevis (African clawed frog)).